We begin with the raw amino-acid sequence, 355 residues long: Tetraacyldisaccharide 4'-kinase (355 aa).

ATP is bound at residue 48-55; sequence SVGGTGKT.

The protein belongs to the LpxK family.

It catalyses the reaction a lipid A disaccharide + ATP = a lipid IVA + ADP + H(+). The protein operates within glycolipid biosynthesis; lipid IV(A) biosynthesis; lipid IV(A) from (3R)-3-hydroxytetradecanoyl-[acyl-carrier-protein] and UDP-N-acetyl-alpha-D-glucosamine: step 6/6. Functionally, transfers the gamma-phosphate of ATP to the 4'-position of a tetraacyldisaccharide 1-phosphate intermediate (termed DS-1-P) to form tetraacyldisaccharide 1,4'-bis-phosphate (lipid IVA). In Pelodictyon phaeoclathratiforme (strain DSM 5477 / BU-1), this protein is Tetraacyldisaccharide 4'-kinase.